The chain runs to 199 residues: Protein GrpE (199 aa).

The protein belongs to the GrpE family. Homodimer.

It localises to the cytoplasm. Functionally, participates actively in the response to hyperosmotic and heat shock by preventing the aggregation of stress-denatured proteins, in association with DnaK and GrpE. It is the nucleotide exchange factor for DnaK and may function as a thermosensor. Unfolded proteins bind initially to DnaJ; upon interaction with the DnaJ-bound protein, DnaK hydrolyzes its bound ATP, resulting in the formation of a stable complex. GrpE releases ADP from DnaK; ATP binding to DnaK triggers the release of the substrate protein, thus completing the reaction cycle. Several rounds of ATP-dependent interactions between DnaJ, DnaK and GrpE are required for fully efficient folding. This Fusobacterium nucleatum subsp. nucleatum (strain ATCC 25586 / DSM 15643 / BCRC 10681 / CIP 101130 / JCM 8532 / KCTC 2640 / LMG 13131 / VPI 4355) protein is Protein GrpE.